A 637-amino-acid chain; its full sequence is tRNA uridine 5-carboxymethylaminomethyl modification enzyme MnmG (637 aa).

Residues 15 to 20 (GAGHAG), V127, and S182 each bind FAD. 274-288 (GPRYCPSIEDKVVRF) serves as a coordination point for NAD(+). Q371 contributes to the FAD binding site.

It belongs to the MnmG family. As to quaternary structure, homodimer. Heterotetramer of two MnmE and two MnmG subunits. FAD serves as cofactor.

The protein resides in the cytoplasm. Functionally, NAD-binding protein involved in the addition of a carboxymethylaminomethyl (cmnm) group at the wobble position (U34) of certain tRNAs, forming tRNA-cmnm(5)s(2)U34. This Heliobacterium modesticaldum (strain ATCC 51547 / Ice1) protein is tRNA uridine 5-carboxymethylaminomethyl modification enzyme MnmG.